The primary structure comprises 151 residues: UPF0735 ACT domain-containing protein SAUSA300_1599 (151 aa).

Positions 74 to 149 constitute an ACT domain; the sequence is TLILYVTDIV…YVSKVELISM (76 aa).

This sequence belongs to the UPF0735 family.

This Staphylococcus aureus (strain USA300) protein is UPF0735 ACT domain-containing protein SAUSA300_1599.